The chain runs to 125 residues: Large ribosomal subunit protein eL31 (125 aa).

An N-acetylmethionine modification is found at M1. S15 is subject to Phosphoserine. 2 positions are modified to N6-succinyllysine: K55 and K70. Position 75 is an N6-acetyllysine; alternate (K75). K75 is modified (N6-succinyllysine; alternate). Residue S98 is modified to Phosphoserine.

This sequence belongs to the eukaryotic ribosomal protein eL31 family. In terms of assembly, component of the large ribosomal subunit.

The protein localises to the cytoplasm. Its function is as follows. Component of the large ribosomal subunit. The ribosome is a large ribonucleoprotein complex responsible for the synthesis of proteins in the cell. The sequence is that of Large ribosomal subunit protein eL31 (RPL31) from Oryctolagus cuniculus (Rabbit).